The following is a 167-amino-acid chain: Photosystem I assembly protein Ycf3 (167 aa).

TPR repeat units lie at residues 35–68 (AFTY…EIDP), 72–105 (SYIL…NPSL), and 120–153 (GEQA…APGN).

The protein belongs to the Ycf3 family.

Its subcellular location is the plastid. It localises to the chloroplast thylakoid membrane. Its function is as follows. Essential for the assembly of the photosystem I (PSI) complex. May act as a chaperone-like factor to guide the assembly of the PSI subunits. The chain is Photosystem I assembly protein Ycf3 from Chara vulgaris (Common stonewort).